Consider the following 126-residue polypeptide: Hydrogenase maturation factor HypA (126 aa).

His2 contacts Ni(2+). Zn(2+) is bound by residues Cys78, Cys81, Cys97, and Cys100.

The protein belongs to the HypA/HybF family.

Functionally, involved in the maturation of [NiFe] hydrogenases. Required for nickel insertion into the metal center of the hydrogenase. The protein is Hydrogenase maturation factor HypA of Methanococcus maripaludis (strain C6 / ATCC BAA-1332).